Reading from the N-terminus, the 828-residue chain is Protein TAPT1 homolog (828 aa).

3 stretches are compositionally biased toward low complexity: residues 67–83 (NNNN…GNHI), 212–233 (QQTQ…SQQP), and 302–321 (SNNN…NNNN). Disordered stretches follow at residues 67-92 (NNNN…NSSG), 212-236 (QQTQ…PFSY), and 297-346 (QTTP…TSSI). A run of 5 helical transmembrane segments spans residues 428-448 (ISFG…FLPI), 472-492 (QIFD…LNFI), 562-582 (ILGP…HSLV), 722-742 (SSWG…SIVV), and 754-774 (IFGI…KIFI). A compositionally biased stretch (low complexity) spans 797-822 (LSSSSSSSSSNSLNTTSTTSTSTSTT). Positions 797 to 828 (LSSSSSSSSSNSLNTTSTTSTSTSTTNDKKNN) are disordered.

The protein belongs to the TAPT1 family.

The protein resides in the membrane. This is Protein TAPT1 homolog from Dictyostelium discoideum (Social amoeba).